Reading from the N-terminus, the 693-residue chain is Protein-glutamine gamma-glutamyltransferase E (693 aa).

Tyr111 carries the post-translational modification Phosphotyrosine. Thr112 is modified (phosphothreonine). Ca(2+) contacts are provided by Ala222, Asn225, Asn227, Asp228, and Asn230. Residue Cys273 is part of the active site. 5 residues coordinate Ca(2+): Asp302, Asp304, Asn306, Ser308, and Asp325. Active-site residues include His331 and Asp354. 4 residues coordinate Ca(2+): Asn394, Thr416, Glu444, and Glu449. The interval 457–483 (LDKLKPNASFGATSSRNPEGEDKEPSI) is disordered.

It belongs to the transglutaminase superfamily. Transglutaminase family. Consists of two polypeptide chains, which are synthesized as a precursor form of a single polypeptide. The cofactor is Ca(2+). In terms of processing, activated by proteolytic processing. In vitro activation is commonly achieved by cleavage with dispase, a neutral bacterial protease. Physiological activation may be catalyzed by CTSL and, to a lesser extent, by CTSS. Expressed in skin and stomach and, at lower levels, in testis, kidney and spleen (at protein level). On the basis of its catalytic activity, detected in the epidermis, around the granular and spinous layers but not in the outermost cornified layers. In hair follicles, mainly located in the medulla and the hair cortex.

The protein resides in the cytoplasm. The enzyme catalyses L-glutaminyl-[protein] + L-lysyl-[protein] = [protein]-L-lysyl-N(6)-5-L-glutamyl-[protein] + NH4(+). Catalyzes the calcium-dependent formation of isopeptide cross-links between glutamine and lysine residues in various proteins, as well as the conjugation of polyamines to proteins. Involved in the formation of the cornified envelope (CE), a specialized component consisting of covalent cross-links of proteins beneath the plasma membrane of terminally differentiated keratinocytes. Catalyzes small proline-rich proteins (SPRR1 and SPRR2) and LOR cross-linking to form small interchain oligomers, which are further cross-linked by TGM1 onto the growing CE scaffold. In hair follicles, involved in cross-linking structural proteins to hardening the inner root sheath. This Mus musculus (Mouse) protein is Protein-glutamine gamma-glutamyltransferase E (Tgm3).